A 240-amino-acid polypeptide reads, in one-letter code: Small ribosomal subunit protein uS3 (240 aa).

Residues 39 to 109 form the KH type-2 domain; the sequence is IRQHIDANLN…QIRINVVEVN (71 aa). The disordered stretch occupies residues 216 to 240; that stretch reads TSAANAAPLPRRKSRRQQFEDRSEQ.

Belongs to the universal ribosomal protein uS3 family. Part of the 30S ribosomal subunit. Forms a tight complex with proteins S10 and S14.

In terms of biological role, binds the lower part of the 30S subunit head. Binds mRNA in the 70S ribosome, positioning it for translation. The sequence is that of Small ribosomal subunit protein uS3 from Picosynechococcus sp. (strain ATCC 27264 / PCC 7002 / PR-6) (Agmenellum quadruplicatum).